A 579-amino-acid chain; its full sequence is SHC-transforming protein 1 (579 aa).

M1 carries the post-translational modification N-acetylmethionine. A disordered region spans residues 1–137; that stretch reads MDLLPPKPKY…QLGGEEWTRH (137 aa). Residues 16-44 show a composition bias toward low complexity; that stretch reads ESLSSLEEGASGSTPPEELPSPSASSLGP. A phosphoserine mark is found at S36 and S139. Residue K154 is modified to N6-acetyllysine. The region spanning 156–339 is the PID domain; it reads MGPGVSYLVR…AGFDGSAWDE (184 aa). Positions 337–357 are disordered; it reads WDEEEEEPPDHQYYNDFPGKE. The CH1 stretch occupies residues 340–483; it reads EEEEPPDHQY…SMAEQLQGEP (144 aa). Y349, Y350, and Y423 each carry phosphotyrosine. A disordered region spans residues 432 to 451; the sequence is ARQAGGGAGPPNPSLNGSAP. S449 is subject to Phosphoserine. An SH2 domain is found at 484-575; that stretch reads WFHGKLSRRE…GSELCLQQPV (92 aa).

As to quaternary structure, interacts with CPNE3; this interaction may mediate the binding of CPNE3 with ERBB2. Interacts with the NPXY motif of tyrosine-phosphorylated IGF1R and INSR in vitro via the PID domain. Once activated, binds to GRB2. Interacts with tyrosine-phosphorylated DDR2 and CD3T. Interacts with the N-terminal region of APS. Interacts with GRB7 and KIT. Interacts with PTK2/FAK1. Interacts with phosphorylated LRP1 and IRS4. Interacts with FLT4 (tyrosine-phosphorylated). Interacts with PDGFRB (tyrosine-phosphorylated). Interacts with ERBB4. Interacts with TEK/TIE2 (tyrosine-phosphorylated). Interacts with ALK, GAB2, TRIM31, INPP5D/SHIP1 and INPPL1/SHIP2. Interacts with PTPN6/SHP (tyrosine phosphorylated). Identified in a complex containing FGFR4, NCAM1, CDH2, PLCG1, FRS2, SRC, SHC1, GAP43 and CTTN. Interacts with EPHB1 and GRB2; activates the MAPK/ERK cascade to regulate cell migration. Interacts with the Trk receptors NTRK1, NTRK2 and NTRK3; in a phosphotyrosine-dependent manner. Interacts with CEACAM1; this interaction is CEACAM1-phosphorylation-dependent and mediates interaction with EGFR or INSR resulting in decrease coupling of SHC1 to the MAPK3/ERK1-MAPK1/ERK2 pathway. Interacts (via PID domain) with PEAK1 (when phosphorylated at 'Tyr-1177'). Found in a complex with PPP1CA, PPP1CC, SHC1 and PEAK1. Post-translationally, phosphorylated in response to FLT4 signaling. Tyrosine phosphorylated by ligand-activated PDGFRB. May be tyrosine phosphorylated by activated PTK2/FAK1. Tyrosine phosphorylated by TEK/TIE2. Tyrosine phosphorylated by activated PTK2B/PYK2. Dephosphorylation by PTPN2 may regulate interaction with GRB2. Phosphorylated by activated epidermal growth factor receptor. Phosphorylated in response to KIT signaling. Isoform p47Shc and isoform p52Shc are phosphorylated on tyrosine residues of the Pro-rich domain. Isoform p66Shc is phosphorylated on Ser-36 by PRKCB upon treatment with insulin, hydrogen peroxide or irradiation with ultraviolet light. FLT3 signaling promotes tyrosine phosphorylation of isoform p47Shc and isoform p52Shc. Also tyrosine phosphorylated by ligand-activated ALK. Widely expressed. Expressed in neural stem cells but absent in mature neurons.

It is found in the cytoplasm. It localises to the cell junction. The protein resides in the focal adhesion. Its subcellular location is the mitochondrion matrix. The protein localises to the mitochondrion. Its function is as follows. Signaling adapter that couples activated growth factor receptors to signaling pathways. Participates in signaling downstream of the angiopoietin receptor TEK/TIE2, and plays a role in the regulation of endothelial cell migration and sprouting angiogenesis. Participates in a signaling cascade initiated by activated KIT and KITLG/SCF. Isoform p47Shc and isoform p52Shc, once phosphorylated, couple activated receptor kinases to Ras via the recruitment of the GRB2/SOS complex and are implicated in the cytoplasmic propagation of mitogenic signals. Isoform p47Shc and isoform p52 may thus function as initiators of the Ras signaling cascade in various non-neuronal systems. Isoform p66Shc does not mediate Ras activation, but is involved in signal transduction pathways that regulate the cellular response to oxidative stress and life span. Isoform p66Shc acts as a downstream target of the tumor suppressor p53 and is indispensable for the ability of stress-activated p53 to induce elevation of intracellular oxidants, cytochrome c release and apoptosis. The expression of isoform p66Shc has been correlated with life span. This Mus musculus (Mouse) protein is SHC-transforming protein 1 (Shc1).